The sequence spans 1185 residues: Pyruvate carboxylase (1185 aa).

One can recognise a Biotin carboxylation domain in the interval 32–484 (KFTKVLVANR…WTTFIDDTPE (453 aa)). Positions 150, 234, and 269 each coordinate ATP. The region spanning 154–351 (RAIAIRCGVP…IVSAQLHVAA (198 aa)) is the ATP-grasp domain. Residue arginine 326 is part of the active site. The region spanning 570 to 838 (GLIMDTTWRD…QLEFDNNQLR (269 aa)) is the Pyruvate carboxyltransferase domain. Residues 578 to 582 (RDAHQ) and arginine 651 contribute to the substrate site. Aspartate 579 is an a divalent metal cation binding site. A divalent metal cation contacts are provided by lysine 747, histidine 777, and histidine 779. An N6-carboxylysine modification is found at lysine 747. Threonine 912 serves as a coordination point for substrate. Residues 1108-1183 (RADPGNPGHV…NGGDLCAVLE (76 aa)) form the Biotinyl-binding domain. Lysine 1149 carries the N6-biotinyllysine modification.

Requires biotin as cofactor. Zn(2+) is required as a cofactor.

The protein localises to the cytoplasm. It catalyses the reaction hydrogencarbonate + pyruvate + ATP = oxaloacetate + ADP + phosphate + H(+). It participates in carbohydrate biosynthesis; gluconeogenesis. Functionally, pyruvate carboxylase catalyzes a 2-step reaction, involving the ATP-dependent carboxylation of the covalently attached biotin in the first step and the transfer of the carboxyl group to pyruvate in the second. The polypeptide is Pyruvate carboxylase (pyr1) (Schizosaccharomyces pombe (strain 972 / ATCC 24843) (Fission yeast)).